The primary structure comprises 280 residues: MALKSYKPTTPGQRGLVLIDRSELWKGRPVKSLTEGLTKSGGRNNTGRITSRRRGGGAKRLYRIVDFKRNKFDVAATVERIEYDPNRTAFIALIKYEDGEQAYILAPQRLAVGDKVVASAKADIKPGNAMPFSGMPIGTIVHNIEMKPGKGGQIARAAGTYAQFVGRDGGYAQIRLSSGELRMVRQECMATVGAVSNPDNSNQNYGKAGRMRHKGIRPSVRGVAMNPIDHPHGGGEGRTSGGRTPVTPWGKDTKGTRTRNKNKASQKLIIRSRHAKKKGR.

2 disordered regions span residues 33-55 and 224-266; these read LTEG…RRRG and AMNP…KASQ. Residues 256–266 are compositionally biased toward basic residues; that stretch reads TRTRNKNKASQ.

This sequence belongs to the universal ribosomal protein uL2 family. In terms of assembly, part of the 50S ribosomal subunit. Forms a bridge to the 30S subunit in the 70S ribosome.

In terms of biological role, one of the primary rRNA binding proteins. Required for association of the 30S and 50S subunits to form the 70S ribosome, for tRNA binding and peptide bond formation. It has been suggested to have peptidyltransferase activity; this is somewhat controversial. Makes several contacts with the 16S rRNA in the 70S ribosome. The sequence is that of Large ribosomal subunit protein uL2 from Ruegeria pomeroyi (strain ATCC 700808 / DSM 15171 / DSS-3) (Silicibacter pomeroyi).